The following is a 292-amino-acid chain: [LysW]-aminoadipate kinase (292 aa).

Substrate is bound by residues Arg-89 and Asn-193.

This sequence belongs to the acetylglutamate kinase family. LysZ subfamily.

The protein resides in the cytoplasm. It carries out the reaction [amino-group carrier protein]-C-terminal-N-(1,4-dicarboxybutan-1-yl)-L-glutamine + ATP = [amino-group carrier protein]-C-terminal-N-(1-carboxy-5-phosphooxy-5-oxopentan-1-yl)-L-glutamine + ADP. The protein operates within amino-acid biosynthesis; L-lysine biosynthesis via AAA pathway; L-lysine from L-alpha-aminoadipate (Thermus route): step 2/5. Catalyzes the phosphorylation of LysW-gamma-alpha-aminoadipate. The chain is [LysW]-aminoadipate kinase from Deinococcus radiodurans (strain ATCC 13939 / DSM 20539 / JCM 16871 / CCUG 27074 / LMG 4051 / NBRC 15346 / NCIMB 9279 / VKM B-1422 / R1).